The following is a 252-amino-acid chain: Ribosomal RNA small subunit methyltransferase J (252 aa).

S-adenosyl-L-methionine-binding positions include 101–102 (RD), 117–118 (ER), 153–154 (SS), and D171.

It belongs to the methyltransferase superfamily. RsmJ family.

The protein resides in the cytoplasm. The enzyme catalyses guanosine(1516) in 16S rRNA + S-adenosyl-L-methionine = N(2)-methylguanosine(1516) in 16S rRNA + S-adenosyl-L-homocysteine + H(+). In terms of biological role, specifically methylates the guanosine in position 1516 of 16S rRNA. The protein is Ribosomal RNA small subunit methyltransferase J of Salmonella schwarzengrund (strain CVM19633).